Here is a 284-residue protein sequence, read N- to C-terminus: Tropomyosin (284 aa).

Position 1 is an N-acetylmethionine (methionine 1). 2 disordered regions span residues 1 to 49 (MDAI…NQKK) and 103 to 126 (EERL…SERM). Residues 1–284 (MDAIKKKMQA…DQAFSELSGF (284 aa)) are a coiled coil. Residues 12–45 (KLEKDNAMDKADTLEQQNKEANLRAEKTEEEIRA) are compositionally biased toward basic and acidic residues.

It belongs to the tropomyosin family. In terms of assembly, homodimer. In terms of tissue distribution, expressed in leg muscle and chest protection muscle (at protein level).

Tropomyosin, in association with the troponin complex, plays a central role in the calcium dependent regulation of muscle contraction. The chain is Tropomyosin from Chionoecetes opilio (Atlantic snow crab).